A 146-amino-acid chain; its full sequence is Basic phospholipase A2 paradoxin-like alpha chain (146 aa).

An N-terminal signal peptide occupies residues 1-27 (MHPAHLLVLLAVCVSLLGASDIPPLPL). Intrachain disulfides connect Cys38–Cys99, Cys54–Cys145, Cys56–Cys72, Cys71–Cys126, Cys78–Cys119, Cys88–Cys112, and Cys106–Cys117. The Ca(2+) site is built by Tyr55, Gly57, and Gly59. His75 is an active-site residue. Asp76 lines the Ca(2+) pocket. Asp120 is an active-site residue.

This sequence belongs to the phospholipase A2 family. Group I subfamily. D49 sub-subfamily. Heterotrimer of alpha, beta, and gamma chains; non-covalently linked. It depends on Ca(2+) as a cofactor. Expressed by the venom gland.

It is found in the secreted. It carries out the reaction a 1,2-diacyl-sn-glycero-3-phosphocholine + H2O = a 1-acyl-sn-glycero-3-phosphocholine + a fatty acid + H(+). Its function is as follows. Heterotrimer: Snake venom phospholipase A2 (PLA2) heterotrimer that acts as a potent presynaptic neurotoxin by blocking synaptic transmission and synaptic vesicle recycling. May act by binding in a calcium-dependent fashion to neurotonal pentraxin-1 (NPTX1) and neurotonal pentraxin-2 (NPTX2), but not to neuronal pentraxin receptor (NPTXR). Also binds to taipoxin-associated calcium binding protein 49 (RCN2), a protein localized in the lumen of endoplasmic reticulum. Functionally, monomer (alpha chain): Snake venom phospholipase A2 (PLA2) alpha chain that possesses the same high enzymatic activity than the heterotrimer. PLA2 catalyzes the calcium-dependent hydrolysis of the 2-acyl groups in 3-sn-phosphoglycerides. The protein is Basic phospholipase A2 paradoxin-like alpha chain of Oxyuranus microlepidotus (Inland taipan).